The primary structure comprises 822 residues: Serine/threonine-protein kinase kin-29 (822 aa).

The Protein kinase domain maps to 16 to 267 (YDVGRAIGKG…IQNVLQHRWM (252 aa)). ATP contacts are provided by residues 22–30 (IGKGNFATV) and K45. Residue D138 is the Proton acceptor of the active site. Disordered stretches follow at residues 348–367 (EGTGEEFPRRGSRGSILSGK), 389–423 (LSSPDCDSDDSSNSDLCDDSPMSSMGPMNHERQFG), and 577–602 (NPIPRYQRTPYTKAPPAERRSSWASP). Residues 394–406 (CDSDDSSNSDLCD) are compositionally biased toward acidic residues.

It belongs to the protein kinase superfamily. CAMK Ser/Thr protein kinase family. SNF1 subfamily. As to quaternary structure, interacts with tax-6. The cofactor is Mg(2+). Autophosphorylated. Elevated cAMP levels appears to act via PKA to directly or indirectly phosphorylate multiple sites on kin-29 and inhibit function. Primarily neuronal, with additional expression in body wall muscle and hypodermal cells. Among neuronal cells, expressed in multiple sensory neurons and interneurons in the lateral, anterior, and lumbar ganglia, as well as in motor neurons in the ventral motor cord. Present in the AWB and AWC olfactory neurons.

The protein resides in the cytoplasm. It localises to the nucleus. It carries out the reaction L-seryl-[protein] + ATP = O-phospho-L-seryl-[protein] + ADP + H(+). It catalyses the reaction L-threonyl-[protein] + ATP = O-phospho-L-threonyl-[protein] + ADP + H(+). Functionally, regulates chemoreceptor expression by phosphorylating the hda-4 class II histone deacetylase (HDAC) and inhibiting the gene repression functions of hda-4 and the mef-2 transcription factor, enabling the correct sensing and transduction of food signals. Role in determining body size, the dauer decision and serotonin-mediated egg laying. May modulate the Sma/Mab pathway and regulates development in the later larval stages. This chain is Serine/threonine-protein kinase kin-29, found in Caenorhabditis elegans.